A 116-amino-acid chain; its full sequence is Protein Rev (116 aa).

Residues S5 and S8 each carry the phosphoserine; by host CK2 modification. The tract at residues 18–26 (IIKILYQSN) is homomultimerization. The disordered stretch occupies residues 24–49 (QSNPHPSPEGTRQARRNRRRRWRERQ). The Nuclear localization signal and RNA-binding (RRE) signature appears at 34-50 (TRQARRNRRRRWRERQR). Residues 36–47 (QARRNRRRRWRE) are compositionally biased toward basic residues. Positions 73–84 (LQLPPLDRLTLD) match the Nuclear export signal and binding to XPO1 motif. A phosphoserine; by host mark is found at S92 and S99.

This sequence belongs to the HIV-1 REV protein family. As to quaternary structure, homomultimer; when bound to the RRE. Multimeric assembly is essential for activity and may involve XPO1. Binds to human KPNB1, XPO1, TNPO1, RANBP5 and IPO7. Interacts with the viral Integrase. Interacts with human KHDRBS1. Interacts with human NAP1; this interaction decreases Rev multimerization and stimulates its activity. Interacts with human DEAD-box helicases DDX3 and DDX24; these interactions may serve for viral RNA export to the cytoplasm and packaging, respectively. Interacts with human PSIP1; this interaction may inhibit HIV-1 DNA integration by promoting dissociation of the Integrase-LEDGF/p75 complex. Post-translationally, asymmetrically arginine dimethylated at one site by host PRMT6. Methylation impairs the RNA-binding activity and export of viral RNA from the nucleus to the cytoplasm. Phosphorylated by protein kinase CK2. Presence of, and maybe binding to the N-terminus of the regulatory beta subunit of CK2 is necessary for CK2-mediated Rev's phosphorylation.

It is found in the host nucleus. The protein resides in the host nucleolus. The protein localises to the host cytoplasm. Functionally, escorts unspliced or incompletely spliced viral pre-mRNAs (late transcripts) out of the nucleus of infected cells. These pre-mRNAs carry a recognition sequence called Rev responsive element (RRE) located in the env gene, that is not present in fully spliced viral mRNAs (early transcripts). This function is essential since most viral proteins are translated from unspliced or partially spliced pre-mRNAs which cannot exit the nucleus by the pathway used by fully processed cellular mRNAs. Rev itself is translated from a fully spliced mRNA that readily exits the nucleus. Rev's nuclear localization signal (NLS) binds directly to KPNB1/Importin beta-1 without previous binding to KPNA1/Importin alpha-1. KPNB1 binds to the GDP bound form of RAN (Ran-GDP) and targets Rev to the nucleus. In the nucleus, the conversion from Ran-GDP to Ran-GTP dissociates Rev from KPNB1 and allows Rev's binding to the RRE in viral pre-mRNAs. Rev multimerization on the RRE via cooperative assembly exposes its nuclear export signal (NES) to the surface. Rev can then form a complex with XPO1/CRM1 and Ran-GTP, leading to nuclear export of the complex. Conversion from Ran-GTP to Ran-GDP mediates dissociation of the Rev/RRE/XPO1/RAN complex, so that Rev can return to the nucleus for a subsequent round of export. Beside KPNB1, also seems to interact with TNPO1/Transportin-1, RANBP5/IPO5 and IPO7/RANBP7 for nuclear import. The nucleoporin-like HRB/RIP is an essential cofactor that probably indirectly interacts with Rev to release HIV RNAs from the perinuclear region to the cytoplasm. The sequence is that of Protein Rev from Human immunodeficiency virus type 1 group M subtype B (isolate SF33) (HIV-1).